A 203-amino-acid polypeptide reads, in one-letter code: Cytochrome c biogenesis ATP-binding export protein CcmA (203 aa).

The ABC transporter domain occupies 2–203 (LEALDLAGVR…KTSQTVRMGA (202 aa)). 34–41 (GENGSGKT) contributes to the ATP binding site.

It belongs to the ABC transporter superfamily. CcmA exporter (TC 3.A.1.107) family. In terms of assembly, the complex is composed of two ATP-binding proteins (CcmA) and two transmembrane proteins (CcmB).

It localises to the cell inner membrane. The enzyme catalyses heme b(in) + ATP + H2O = heme b(out) + ADP + phosphate + H(+). In terms of biological role, part of the ABC transporter complex CcmAB involved in the biogenesis of c-type cytochromes; once thought to export heme, this seems not to be the case, but its exact role is uncertain. Responsible for energy coupling to the transport system. In Pseudomonas aeruginosa, this protein is Cytochrome c biogenesis ATP-binding export protein CcmA.